The sequence spans 70 residues: ATP synthase subunit c (70 aa).

2 helical membrane passes run 4-24 and 45-65; these read IAAA…NGLI and IMFI…VIAF.

The protein belongs to the ATPase C chain family. F-type ATPases have 2 components, F(1) - the catalytic core - and F(0) - the membrane proton channel. F(1) has five subunits: alpha(3), beta(3), gamma(1), delta(1), epsilon(1). F(0) has three main subunits: a(1), b(2) and c(10-14). The alpha and beta chains form an alternating ring which encloses part of the gamma chain. F(1) is attached to F(0) by a central stalk formed by the gamma and epsilon chains, while a peripheral stalk is formed by the delta and b chains.

Its subcellular location is the cell membrane. Functionally, f(1)F(0) ATP synthase produces ATP from ADP in the presence of a proton or sodium gradient. F-type ATPases consist of two structural domains, F(1) containing the extramembraneous catalytic core and F(0) containing the membrane proton channel, linked together by a central stalk and a peripheral stalk. During catalysis, ATP synthesis in the catalytic domain of F(1) is coupled via a rotary mechanism of the central stalk subunits to proton translocation. Key component of the F(0) channel; it plays a direct role in translocation across the membrane. A homomeric c-ring of between 10-14 subunits forms the central stalk rotor element with the F(1) delta and epsilon subunits. The protein is ATP synthase subunit c of Staphylococcus haemolyticus (strain JCSC1435).